Consider the following 1203-residue polypeptide: Rho GTPase-activating protein gacGG (1203 aa).

RCC1 repeat units follow at residues 52–104 (TGEL…AIME), 106–148 (GLLY…VVAD), 155–204 (KRSV…AIVE), 206–255 (NEVF…ARSG), 257–298 (GNVC…VLSE), 299–359 (KGEI…EGRN), and 361–410 (LSVY…YLRG). The tract at residues 316–343 (KLDVNSSPNINSSSGTTTPTTNTTTTTK) is disordered. Residues 320–343 (NSSPNINSSSGTTTPTTNTTTTTK) show a composition bias toward low complexity. One can recognise a Rho-GAP domain in the interval 381-594 (VDIAESMRRK…TIMKQYPLME (214 aa)). Residues 649–679 (TLEIKNNQNNQNNQKENNNNNNNINNSNNNN) adopt a coiled-coil conformation. Disordered regions lie at residues 657 to 725 (NNQN…TGNI), 746 to 789 (KDGN…NLSP), and 831 to 852 (FANS…LIGS). Low complexity-rich tracts occupy residues 746–788 (KDGN…PNLS) and 833–852 (NSGS…LIGS). A coiled-coil region spans residues 995–1078 (FDLLEKSMTE…ISNQNLSRVN (84 aa)).

Its subcellular location is the cytoplasm. In terms of biological role, rho GTPase-activating protein involved in the signal transduction pathway. In Dictyostelium discoideum (Social amoeba), this protein is Rho GTPase-activating protein gacGG (gacGG).